The following is a 263-amino-acid chain: 4-hydroxy-tetrahydrodipicolinate reductase (263 aa).

NAD(+)-binding positions include 8–13, aspartate 34, 99–101, and 125–128; these read GACGRM, GTT, and SPNY. Histidine 157 serves as the catalytic Proton donor/acceptor. Histidine 158 is a binding site for (S)-2,3,4,5-tetrahydrodipicolinate. Lysine 161 (proton donor) is an active-site residue. 167–168 contacts (S)-2,3,4,5-tetrahydrodipicolinate; the sequence is GT.

This sequence belongs to the DapB family.

The protein localises to the cytoplasm. It carries out the reaction (S)-2,3,4,5-tetrahydrodipicolinate + NAD(+) + H2O = (2S,4S)-4-hydroxy-2,3,4,5-tetrahydrodipicolinate + NADH + H(+). It catalyses the reaction (S)-2,3,4,5-tetrahydrodipicolinate + NADP(+) + H2O = (2S,4S)-4-hydroxy-2,3,4,5-tetrahydrodipicolinate + NADPH + H(+). The protein operates within amino-acid biosynthesis; L-lysine biosynthesis via DAP pathway; (S)-tetrahydrodipicolinate from L-aspartate: step 4/4. In terms of biological role, catalyzes the conversion of 4-hydroxy-tetrahydrodipicolinate (HTPA) to tetrahydrodipicolinate. This chain is 4-hydroxy-tetrahydrodipicolinate reductase, found in Methanosarcina mazei (strain ATCC BAA-159 / DSM 3647 / Goe1 / Go1 / JCM 11833 / OCM 88) (Methanosarcina frisia).